We begin with the raw amino-acid sequence, 458 residues long: Alpha-2C adrenergic receptor (458 aa).

Residues 1-51 are Extracellular-facing; that stretch reads MASPALAAALAAAAAEGPNGSDAGEWGSGGGANASGTDWVPPPGQYSAGAV. N-linked (GlcNAc...) asparagine glycans are attached at residues asparagine 19 and asparagine 33. The helical transmembrane segment at 52 to 76 threads the bilayer; sequence AGLAAVVGFLIVFTVVGNVLVVIAV. Topologically, residues 77 to 88 are cytoplasmic; sequence LTSRALRAPQNL. The helical transmembrane segment at 89–114 threads the bilayer; that stretch reads FLVSLASADILVATLVMPFSLANELM. At 115-124 the chain is on the extracellular side; it reads AYWYFGQVWC. Cysteine 124 and cysteine 202 are oxidised to a cystine. The helical transmembrane segment at 125–147 threads the bilayer; the sequence is GVYLALDVLFCTSSIVHLCAISL. Over 148-168 the chain is Cytoplasmic; sequence DRYWSVTQAVEYNLKRTPRRV. The helical transmembrane segment at 169 to 191 threads the bilayer; that stretch reads KATIVAVWLISAVISFPPLVSFY. Residues 192-207 are Extracellular-facing; sequence RRPDGAAYPQCGLNDE. The chain crosses the membrane as a helical span at residues 208 to 231; that stretch reads TWYILSSCIGSFFAPCLIMGLVYA. The Cytoplasmic portion of the chain corresponds to 232 to 379; the sequence is RIYRVAKLRT…QAREKRFTFV (148 aa). Residues 245–343 are disordered; sequence SEKRGPAGPD…SPGPGGRLSR (99 aa). Over residues 291–303 the composition is skewed to basic residues; the sequence is RRRRRGALRRGGR. A helical transmembrane segment spans residues 380-403; that stretch reads LAVVMGVFVLCWFPFFFSYSLYGI. Residues 404-416 lie on the Extracellular side of the membrane; the sequence is CREACQLPEPLFK. A helical transmembrane segment spans residues 417–437; that stretch reads FFFWIGYCNSSLNPVIYTVFN. Residues 438-458 lie on the Cytoplasmic side of the membrane; the sequence is QDFRRSFKHILFRRRRRGFRQ.

Belongs to the G-protein coupled receptor 1 family. Adrenergic receptor subfamily. ADRA2C sub-subfamily.

The protein resides in the cell membrane. Functionally, alpha-2 adrenergic receptors mediate the catecholamine-induced inhibition of adenylate cyclase through the action of G proteins. This chain is Alpha-2C adrenergic receptor (Adra2c), found in Mus musculus (Mouse).